The following is a 1470-amino-acid chain: Rap guanine nucleotide exchange factor (1470 aa).

Disordered regions lie at residues 130–227 (PTEP…SYND) and 250–313 (HRRE…GGFM). The span at 173–183 (MPPPPVPPRPL) shows a compositional bias: pro residues. Low complexity-rich tracts occupy residues 184-193 (RLPQTAAKGP) and 215-224 (TTSSSSSNTS). The segment covering 256–266 (NSVGGQAQNGI) has biased composition (polar residues). The span at 275–292 (RSTASSTTTEGETASNEG) shows a compositional bias: low complexity. Residue 347–463 (AFAALPMSIK…IEKDRDGLTG (117 aa)) coordinates a nucleoside 3',5'-cyclic phosphate. An N-terminal Ras-GEF domain is found at 478 to 592 (CGQVLIKGKP…SLLNIACSVK (115 aa)). Residues 597-679 (QVILTRRKDD…LTLMLKNNVL (83 aa)) form the PDZ domain. Residues 782-869 (PEHVLKIYRN…SRYYLKNNSR (88 aa)) form the Ras-associating domain. One can recognise a Ras-GEF domain in the interval 894-1124 (NAQVVAAQLT…FENSNVATMR (231 aa)). Positions 1176–1189 (QTAHRGANSSSTAN) are enriched in polar residues. Disordered regions lie at residues 1176-1213 (QTAH…DQSS), 1253-1326 (KVKG…NIPP), 1347-1370 (VIPT…PASS), and 1422-1455 (ATLP…RMGT). Positions 1198–1211 (PSSLSSQSAGSADQ) are enriched in low complexity. 2 stretches are compositionally biased toward polar residues: residues 1260–1274 (QITS…SLQR) and 1282–1308 (RQAT…YQSD). Over residues 1309–1321 (NGRRQRSGSEGRF) the composition is skewed to basic and acidic residues. Low complexity predominate over residues 1349-1370 (PTHPHGHSPTSPRCRSRSPASS).

This sequence belongs to the RAPGEF2 family. Expressed in hermaphrodite-specific neurons (HSNs), oviduct sheath cells and lateral seam cells.

Functionally, acts as a guanine nucleotide exchange factor for small G protein GTPases like rap-1 and rap-2. Required in the hypodermis, especially in the seam cells, for proper formation of the cuticle. In Caenorhabditis elegans, this protein is Rap guanine nucleotide exchange factor (pxf-1).